We begin with the raw amino-acid sequence, 1006 residues long: Probable sulfite reductase [NADPH] flavoprotein component (1006 aa).

Residues 622 to 852 (EKVFTVHVRA…AVKTSVMKLP (231 aa)) enclose the FAD-binding FR-type domain. FAD is bound by residues 658 to 669 (YDIGEALGVYGV) and 788 to 798 (IKRREYSISSS).

FAD is required as a cofactor. FMN serves as cofactor.

The enzyme catalyses hydrogen sulfide + 3 NADP(+) + 3 H2O = sulfite + 3 NADPH + 4 H(+). It functions in the pathway sulfur metabolism; hydrogen sulfide biosynthesis; hydrogen sulfide from sulfite (NADPH route): step 1/1. This enzyme catalyzes the 6-electron reduction of sulfite to sulfide. This is one of several activities required for the biosynthesis of L-cysteine from sulfate. The polypeptide is Probable sulfite reductase [NADPH] flavoprotein component (Schizosaccharomyces pombe (strain 972 / ATCC 24843) (Fission yeast)).